A 146-amino-acid chain; its full sequence is MEMDKRIKSLAMTAFFGELNTLDIMALIMSIFKRHPNNTIFSVDKDGQFMIDFEYDNYKASQYLDLTLTPISGDECKTHASSIAEQLACADIIKEDISEYIKTTPRLKRFIKKYRNRSDTRISRDTEKLKIALAKGIDYEYIKDAC.

The chain crosses the membrane as a helical span at residues 10–32 (LAMTAFFGELNTLDIMALIMSIF).

Belongs to the orthopoxvirus OPG112 family.

The protein resides in the host membrane. The protein localises to the host cytoplasm. In terms of biological role, contributes to the formation of crescents and immature virions (IV). Interacts with phosphatidylinositol-3-phosphate (PI3P) and phosphatidylinositol-4-phosphate (PI4P) lipids in order to form virion membranes. Mechanistically, mediates proper formation of OPG125-hexamers, and hence the honey comb lattice and spherical immature virus. In Homo sapiens (Human), this protein is Late protein OPG112 (OPG112).